Reading from the N-terminus, the 341-residue chain is Phenylalanine--tRNA ligase alpha subunit (341 aa).

A Mg(2+)-binding site is contributed by glutamate 259.

It belongs to the class-II aminoacyl-tRNA synthetase family. Phe-tRNA synthetase alpha subunit type 1 subfamily. Tetramer of two alpha and two beta subunits. Mg(2+) is required as a cofactor.

It localises to the cytoplasm. The enzyme catalyses tRNA(Phe) + L-phenylalanine + ATP = L-phenylalanyl-tRNA(Phe) + AMP + diphosphate + H(+). The polypeptide is Phenylalanine--tRNA ligase alpha subunit (Mycobacterium tuberculosis (strain ATCC 25177 / H37Ra)).